A 305-amino-acid polypeptide reads, in one-letter code: ATP-dependent Clp protease proteolytic subunit-related protein 4, chloroplastic (305 aa).

The transit peptide at 1–68 (MEVAAATATS…SSDLCGAKLR (68 aa)) directs the protein to the chloroplast.

The protein belongs to the peptidase S14 family. Component of the chloroplastic Clp protease core complex which consist of at least 16 proteins: CLPP4 (3 copies), CLPP5 (3 copies), CLPR4 (2 copies), ClpP1 (1 copy), CLPP6 (1 copy), CLPR2 (1 copy), CLPT1 (1 copy), CLPT2 (1 copy) and 3 copies of CLPP3 and/or CLPR1 and/or CLPR3. The core complex is organized in two heptameric rings, one containing CLPP3,4,5,6 in a 1:2:3:1 ratio and the other CLPP1 and CLPR1,2,3,4 in a 3:1:1:1:1 ratio.

Its subcellular location is the plastid. The protein localises to the chloroplast. Functionally, involved in plastid protein homeostasis. In Arabidopsis thaliana (Mouse-ear cress), this protein is ATP-dependent Clp protease proteolytic subunit-related protein 4, chloroplastic.